The primary structure comprises 111 residues: VAVSADPNEPNVIVTRLTLVCSTAPGPLELDLTGDLESFKIKISFRYIQHTYRKGVKIDKTDYMVGSYGPRAEEYEFLTPMEEAPKGMLARFTDDDKTDHLSGERNLTIKK.

Glycyl lysine isopeptide (Lys-Gly) (interchain with G-Cter in SUMO1); alternate cross-links involve residues K57 and K60. Glycyl lysine isopeptide (Lys-Gly) (interchain with G-Cter in SUMO2); alternate cross-links involve residues K57 and K60. K60 bears the N6-acetyllysine; alternate mark. At K60 the chain carries N6-succinyllysine; alternate.

Belongs to the Rho GDI family. In terms of assembly, monomer. Interacts with FER. Interacts with PLXNB3. Forms a heterodimer with RAC1. Interacts with RHOA, the affinity is increased by three orders of magnitude when RHOA is prenylated. Interacts with PSMD10; the interaction increases ARHGDIA association with RHOA, leading to ARHGDIA-mediated inactivation of RHOA and ROCK and prolonged AKT activation. Interacts with KANK2; the interaction is direct and may regulate the interaction of ARHGDIA with RHOA, RAC1 and CDC42. Interacts with RHOC. Interacts with CDC42. Interacts with NGFR (via death domain); NGFR binding decreases the affinity for RHOA. In terms of processing, the N-terminus is blocked.

It localises to the cytoplasm. Its function is as follows. Controls Rho proteins homeostasis. Regulates the GDP/GTP exchange reaction of the Rho proteins by inhibiting the dissociation of GDP from them, and the subsequent binding of GTP to them. Retains Rho proteins such as CDC42, RAC1 and RHOA in an inactive cytosolic pool, regulating their stability and protecting them from degradation. Actively involved in the recycling and distribution of activated Rho GTPases in the cell, mediates extraction from membranes of both inactive and activated molecules due its exceptionally high affinity for prenylated forms. Through the modulation of Rho proteins, may play a role in cell motility regulation. In glioma cells, inhibits cell migration and invasion by mediating the signals of SEMA5A and PLXNB3 that lead to inactivation of RAC1. The protein is Rho GDP-dissociation inhibitor 1 (ARHGDIA) of Cavia porcellus (Guinea pig).